Consider the following 1138-residue polypeptide: Tyrosine-protein kinase receptor Tie-1 (1138 aa).

A signal peptide spans 1-21; it reads MVWRVPPFLLPILFLASHVGA. The Extracellular portion of the chain corresponds to 22–759; sequence AVDLTLLANL…SRAAEEGLDQ (738 aa). An Ig-like C2-type 1 domain is found at 43 to 105; the sequence is CVSGEAGAGR…PSDLVGVFSC (63 aa). 2 N-linked (GlcNAc...) asparagine glycosylation sites follow: asparagine 83 and asparagine 161. EGF-like domains are found at residues 214–256, 258–303, and 305–345; these read GCGA…TRCE, ACRE…SQCQ, and ACAP…VHCE. 3 disulfide bridges follow: cysteine 228–cysteine 237, cysteine 231–cysteine 244, and cysteine 246–cysteine 255. 3 disulfides stabilise this stretch: cysteine 315/cysteine 327, cysteine 321/cysteine 333, and cysteine 335/cysteine 344. The region spanning 372 to 426 is the Ig-like C2-type 2 domain; the sequence is CAAAGNPFPVRGSIELRKPDGTVLLSTKAIVEPEKTTAEFEVPRLVLADSGFWEC. 3 Fibronectin type-III domains span residues 446 to 545, 548 to 642, and 646 to 739; these read PPVP…CPEP, QPWL…LPPS, and APRH…TLGN. N-linked (GlcNAc...) asparagine glycans are attached at residues asparagine 503, asparagine 596, and asparagine 709. Residues 760–784 traverse the membrane as a helical segment; sequence QLILAVVGSVSATCLTILAALLTLV. Residues 785-1138 lie on the Cytoplasmic side of the membrane; sequence CIRRSCLHRR…AGIDATAEEA (354 aa). One can recognise a Protein kinase domain in the interval 839 to 1118; the sequence is ITFEDLIGEG…RMLEARKAYV (280 aa). ATP is bound by residues 845-853 and lysine 870; that span reads IGEGNFGQV. The active-site Proton acceptor is aspartate 979. The residue at position 1007 (tyrosine 1007) is a Phosphotyrosine; by autocatalysis.

The protein belongs to the protein kinase superfamily. Tyr protein kinase family. Tie subfamily. As to quaternary structure, heterodimer with TEK/TIE2. Interacts with SVEP1 (via C-terminus). In terms of processing, phosphorylated on tyrosine residues in response to ANGPT1, most likely by TEK/TIE2. Specifically expressed in developing vascular endothelial cells.

It localises to the cell membrane. The enzyme catalyses L-tyrosyl-[protein] + ATP = O-phospho-L-tyrosyl-[protein] + ADP + H(+). Transmembrane tyrosine-protein kinase that may modulate TEK/TIE2 activity and contribute to the regulation of angiogenesis. The protein is Tyrosine-protein kinase receptor Tie-1 (TIE1) of Homo sapiens (Human).